Consider the following 124-residue polypeptide: UPF0344 protein BH2983 (124 aa).

4 consecutive transmembrane segments (helical) span residues 15 to 35 (GSWA…KAGK), 40 to 60 (KILH…GAGM), 61 to 81 (LVYW…IVLI), and 102 to 122 (IYWI…YNVI).

It belongs to the UPF0344 family.

Its subcellular location is the cell membrane. The sequence is that of UPF0344 protein BH2983 from Halalkalibacterium halodurans (strain ATCC BAA-125 / DSM 18197 / FERM 7344 / JCM 9153 / C-125) (Bacillus halodurans).